We begin with the raw amino-acid sequence, 150 residues long: Large ribosomal subunit protein bL9 (150 aa).

It belongs to the bacterial ribosomal protein bL9 family.

Binds to the 23S rRNA. This Aromatoleum aromaticum (strain DSM 19018 / LMG 30748 / EbN1) (Azoarcus sp. (strain EbN1)) protein is Large ribosomal subunit protein bL9.